Consider the following 432-residue polypeptide: UDP-N-acetylmuramate--L-alanine ligase (432 aa).

Residue 109-115 coordinates ATP; it reads GAHGKST.

This sequence belongs to the MurCDEF family.

Its subcellular location is the cytoplasm. The catalysed reaction is UDP-N-acetyl-alpha-D-muramate + L-alanine + ATP = UDP-N-acetyl-alpha-D-muramoyl-L-alanine + ADP + phosphate + H(+). It functions in the pathway cell wall biogenesis; peptidoglycan biosynthesis. In terms of biological role, cell wall formation. The sequence is that of UDP-N-acetylmuramate--L-alanine ligase from Campylobacter jejuni subsp. jejuni serotype O:2 (strain ATCC 700819 / NCTC 11168).